A 425-amino-acid polypeptide reads, in one-letter code: Beta-1,4-galactosyltransferase galt-1 (425 aa).

Residues 1–8 lie on the Cytoplasmic side of the membrane; sequence MPRITASK. The helical; Signal-anchor for type II membrane protein transmembrane segment at 9-29 threads the bilayer; sequence IVLLIALSFCITVIYHFPIAT. Residues 30 to 425 lie on the Lumenal side of the membrane; that stretch reads RSSKEYDEYG…FDSVVGLLDL (396 aa). Asn-109 and Asn-152 each carry an N-linked (GlcNAc...) asparagine glycan. In terms of domain architecture, GT92 spans 189–394; sequence KMSICVPALF…LLRVYHYKDK (206 aa).

The protein belongs to the glycosyltransferase 92 family. The cofactor is Mn(2+). In terms of processing, N-glycosylated. Expressed in intestine and coelomocytes.

It is found in the golgi apparatus. The protein resides in the golgi stack membrane. With respect to regulation, inhibited by EDTA, Cu(2+) and Zn(2+). In terms of biological role, catalyzes the transfer of beta-galactose from UDP-galactose to position 4 of alpha-1,6-linked fucose at the reducing end GlcNAc in N-glycan cores. Involved in susceptibility to the nematotoxic C.cinerea galectin Cgl2, likely by contributing to the synthesis of core alpha-1,6-fucosylated N-glycans to which Cgl2 binds. This is Beta-1,4-galactosyltransferase galt-1 from Caenorhabditis elegans.